The following is a 996-amino-acid chain: UPF0182 protein CE0802 (996 aa).

The next 7 membrane-spanning stretches (helical) occupy residues 19–39 (VTWIIGIIALLVLVTPLTVGF), 63–83 (IILFIVFALLAGFVTWLAGYF), 115–135 (ILIIVPIFVGLLGGLVGQRSW), 176–196 (STLLVVAFIIALVGHYLLGGI), 212–234 (GARAQLAVTAGLWMLVRVATYWL), 262–282 (KIILMVISIIVAVAFFSAIFL), and 290–310 (LAVVLLVLSSVVVGAVWPLML). A disordered region spans residues 920–950 (VPDVNATEDADATTDGEDETPAAPAAPAGSE). A compositionally biased stretch (acidic residues) spans 925–939 (ATEDADATTDGEDET). The segment covering 940–950 (PAAPAAPAGSE) has biased composition (low complexity).

This sequence belongs to the UPF0182 family.

Its subcellular location is the cell membrane. This is UPF0182 protein CE0802 from Corynebacterium efficiens (strain DSM 44549 / YS-314 / AJ 12310 / JCM 11189 / NBRC 100395).